We begin with the raw amino-acid sequence, 824 residues long: Type IV secretion system protein PtlC homolog (824 aa).

456–463 (GQSGSGKT) contacts ATP.

It belongs to the TrbE/VirB4 family.

The protein resides in the cell membrane. The sequence is that of Type IV secretion system protein PtlC homolog (ptlC) from Bordetella bronchiseptica (strain ATCC BAA-588 / NCTC 13252 / RB50) (Alcaligenes bronchisepticus).